A 185-amino-acid polypeptide reads, in one-letter code: Ribosome-recycling factor (185 aa).

This sequence belongs to the RRF family.

The protein localises to the cytoplasm. Its function is as follows. Responsible for the release of ribosomes from messenger RNA at the termination of protein biosynthesis. May increase the efficiency of translation by recycling ribosomes from one round of translation to another. This chain is Ribosome-recycling factor, found in Frankia casuarinae (strain DSM 45818 / CECT 9043 / HFP020203 / CcI3).